We begin with the raw amino-acid sequence, 406 residues long: Large ribosomal subunit protein uL4z (406 aa).

The segment at 56–95 (PYAVSKKAGHQTSAESWGTGRAVSRIPRVPGGGTHRAGQA) is disordered.

The protein belongs to the universal ribosomal protein uL4 family.

This is Large ribosomal subunit protein uL4z (RPL4A) from Arabidopsis thaliana (Mouse-ear cress).